A 342-amino-acid chain; its full sequence is GTPase Obg (342 aa).

The region spanning 1–159 (MQFIDQAQIE…KLLRLELKLL (159 aa)) is the Obg domain. The 171-residue stretch at 160–330 (AEVGIIGLPN…MLQEVWGILD (171 aa)) folds into the OBG-type G domain. Residues 166 to 173 (GLPNAGKS), 191 to 195 (FTTLI), 213 to 216 (DIPG), 280 to 283 (NKID), and 311 to 313 (SAV) contribute to the GTP site. Mg(2+) is bound by residues serine 173 and threonine 193.

It belongs to the TRAFAC class OBG-HflX-like GTPase superfamily. OBG GTPase family. Monomer. The cofactor is Mg(2+).

It localises to the cytoplasm. Functionally, an essential GTPase which binds GTP, GDP and possibly (p)ppGpp with moderate affinity, with high nucleotide exchange rates and a fairly low GTP hydrolysis rate. Plays a role in control of the cell cycle, stress response, ribosome biogenesis and in those bacteria that undergo differentiation, in morphogenesis control. This chain is GTPase Obg, found in Nostoc sp. (strain PCC 7120 / SAG 25.82 / UTEX 2576).